The chain runs to 187 residues: NADH-quinone oxidoreductase subunit B (187 aa).

[4Fe-4S] cluster is bound by residues Cys-51, Cys-52, Cys-117, and Cys-149.

It belongs to the complex I 20 kDa subunit family. NDH-1 is composed of 14 different subunits. Subunits NuoB, C, D, E, F, and G constitute the peripheral sector of the complex. [4Fe-4S] cluster serves as cofactor.

It is found in the cell inner membrane. The catalysed reaction is a quinone + NADH + 5 H(+)(in) = a quinol + NAD(+) + 4 H(+)(out). Functionally, NDH-1 shuttles electrons from NADH, via FMN and iron-sulfur (Fe-S) centers, to quinones in the respiratory chain. The immediate electron acceptor for the enzyme in this species is believed to be ubiquinone. Couples the redox reaction to proton translocation (for every two electrons transferred, four hydrogen ions are translocated across the cytoplasmic membrane), and thus conserves the redox energy in a proton gradient. The chain is NADH-quinone oxidoreductase subunit B from Nitratidesulfovibrio vulgaris (strain DSM 19637 / Miyazaki F) (Desulfovibrio vulgaris).